A 355-amino-acid chain; its full sequence is MPACSVTDIRSHVVEDSLPDQVIKGLKSSPKTLPALLFYSNEGLDHWNHHVSQPDFYPRHQEVDILKQRGDEMARAIAPNSVILDLGSANLEKVVHLLKALEAQGKDVTYFALDISAPQLEVTLNEIPTSEFRHVRFAGLHGTFEDGLRWISETPHICDLPHCVLLLGLTIGNFSRASAATFLGNIASQALRGASKDQSSILMSLDSCKVPTQILRAYTSNGVEPFALQSLTFAKTLLRGPMLHNDSDEPLPCYLQPDDWYYHSEWNFVLGRHEASLIPRYRDVHLGSLLQDITVKKDEKIRFGCSYKYDDMERHQLFLDAGVEQDVAWTNEGCDVVIYELKKRSNTEKLGIDRN.

It belongs to the methyltransferase superfamily. Homodimer.

The catalysed reaction is 4-(3-methylbut-2-enyl)-L-tryptophan + S-adenosyl-L-methionine = 4-(3-methylbut-2-enyl)-L-abrine + S-adenosyl-L-homocysteine + H(+). It participates in alkaloid biosynthesis; ergot alkaloid biosynthesis. Functionally, 4-dimethylallyltryptophan N-methyltransferase; part of the gene cluster that mediates the biosynthesis of fungal ergot alkaloid. DmaW catalyzes the first step of ergot alkaloid biosynthesis by condensing dimethylallyl diphosphate (DMAP) and tryptophan to form 4-dimethylallyl-L-tryptophan. The second step is catalyzed by the methyltransferase easF that methylates 4-dimethylallyl-L-tryptophan in the presence of S-adenosyl-L-methionine, resulting in the formation of 4-dimethylallyl-L-abrine. The catalase easC and the FAD-dependent oxidoreductase easE then transform 4-dimethylallyl-L-abrine to chanoclavine-I which is further oxidized by easD in the presence of NAD(+), resulting in the formation of chanoclavine-I aldehyde. Agroclavine dehydrogenase easG then mediates the conversion of chanoclavine-I aldehyde to agroclavine via a non-enzymatic adduct reaction: the substrate is an iminium intermediate that is formed spontaneously from chanoclavine-I aldehyde in the presence of glutathione. Further conversion of agroclavine to paspalic acid is a two-step process involving oxidation of agroclavine to elymoclavine and of elymoclavine to paspalic acid, the second step being performed by the elymoclavine oxidase cloA. However, cloA does not encode a functional enzyme indicating that C.fusiformis terminates its ergot alkaloid pathway at elymoclavine. The chain is 4-dimethylallyltryptophan N-methyltransferase easF from Claviceps fusiformis (Ergot fungus).